Here is a 396-residue protein sequence, read N- to C-terminus: Chalcone synthase B (396 aa).

C170 is a catalytic residue.

Belongs to the thiolase-like superfamily. Chalcone/stilbene synthases family.

It carries out the reaction (E)-4-coumaroyl-CoA + 3 malonyl-CoA + 3 H(+) = 2',4,4',6'-tetrahydroxychalcone + 3 CO2 + 4 CoA. It participates in secondary metabolite biosynthesis; flavonoid biosynthesis. In terms of biological role, the primary product of this enzyme is 4,2',4',6'-tetrahydroxychalcone (also termed naringenin-chalcone or chalcone) which can under specific conditions spontaneously isomerize into naringenin. The sequence is that of Chalcone synthase B (CHSB) from Ipomoea purpurea (Common morning glory).